The chain runs to 472 residues: 6-phosphogluconate dehydrogenase, decarboxylating (472 aa).

NADP(+) contacts are provided by residues 10–15 (GMAVMG), 33–35 (NRT), 74–76 (VQA), and Asn-102. Residues Asn-102 and 128–130 (SGG) each bind substrate. Lys-184 (proton acceptor) is an active-site residue. 187 to 188 (HN) is a binding site for substrate. Glu-191 acts as the Proton donor in catalysis. Residues Tyr-192, Lys-262, Arg-289, Arg-447, and His-453 each coordinate substrate.

This sequence belongs to the 6-phosphogluconate dehydrogenase family. In terms of assembly, homodimer.

The catalysed reaction is 6-phospho-D-gluconate + NADP(+) = D-ribulose 5-phosphate + CO2 + NADPH. Its pathway is carbohydrate degradation; pentose phosphate pathway; D-ribulose 5-phosphate from D-glucose 6-phosphate (oxidative stage): step 3/3. In terms of biological role, catalyzes the oxidative decarboxylation of 6-phosphogluconate to ribulose 5-phosphate and CO(2), with concomitant reduction of NADP to NADPH. The sequence is that of 6-phosphogluconate dehydrogenase, decarboxylating (gnd) from Lactococcus lactis subsp. lactis (strain IL1403) (Streptococcus lactis).